A 218-amino-acid polypeptide reads, in one-letter code: DNA-directed RNA polymerase III subunit RPC7-like (218 aa).

The segment at 130–218 is disordered; that stretch reads TIILPKRPPK…SDDNMDEAIY (89 aa). Residues 139–160 are compositionally biased toward basic and acidic residues; sequence KSTDDKEETIQKLETLEKKEEE. 2 stretches are compositionally biased toward acidic residues: residues 161–193 and 201–218; these read VTSE…EETD and NGED…EAIY.

Belongs to the eukaryotic RPC7 RNA polymerase subunit family. As to quaternary structure, component of the RNA polymerase III (Pol III) complex consisting of 17 subunits. Pol III exists as two alternative complexes defined by the mutually exclusive incorporation of subunit POLR3G/RPC7alpha or POLR3GL/RPC7beta. Found in a trimeric complex with POLR3C/RPC3 and POLR3F/RPC6. Directly interacts with POLR3C. In terms of tissue distribution, expressed in the liver.

It localises to the nucleus. DNA-dependent RNA polymerase catalyzes the transcription of DNA into RNA using the four ribonucleoside triphosphates as substrates. Specific peripheric component of RNA polymerase III which synthesizes small RNAs, such as 5S rRNA and tRNAs. This Mus musculus (Mouse) protein is DNA-directed RNA polymerase III subunit RPC7-like.